The primary structure comprises 544 residues: High affinity immunoglobulin alpha and immunoglobulin mu Fc receptor (544 aa).

An N-terminal signal peptide occupies residues 1–16 (MPLFLILCLLQGSSFA). The Extracellular portion of the chain corresponds to 17-462 (LPQKRPHPRW…TFPEDESSSR (446 aa)). The region spanning 61–169 (PNALKGSRLV…NMLFLSMNLT (109 aa)) is the Ig-like V-type domain. The mediates immunoglobulin Fc fragment-binding stretch occupies residues 75–97 (GGAVTIQCHYAPSSVNRHQRKYW). A disulfide bond links C82 and C153. An N-linked (GlcNAc...) asparagine glycan is attached at N167. The interval 218-325 (DTVASTPGTS…TTKADRPRED (108 aa)) is disordered. Composition is skewed to polar residues over residues 220-232 (VAST…TTAS) and 280-291 (ASKSRSMSNTTE). Residues 307–325 (ASKDRREITTTKADRPRED) show a composition bias toward basic and acidic residues. The chain crosses the membrane as a helical span at residues 463–483 (TLAPVSTMLALFMLMALVLLQ). Topologically, residues 484–544 (RKLRRRRTSQ…LTAPERNPGP (61 aa)) are cytoplasmic. Residues 511 to 544 (PQPDQLPHVERKMLQDDSLPAGASLTAPERNPGP) are disordered.

In terms of assembly, interacts with IGHM; this interaction facilitates the endocytosis of IgM-coated microbes or IgM-antigen immune complexes. N-glycosylated.

It is found in the cell membrane. In terms of biological role, functions as a receptor for the Fc fragment of IgA and IgM. Binds IgA and IgM with high affinity and mediates their endocytosis. May function in the immune response to microbes mediated by IgA and IgM. The protein is High affinity immunoglobulin alpha and immunoglobulin mu Fc receptor (FCAMR) of Pongo abelii (Sumatran orangutan).